The following is a 209-amino-acid chain: Inorganic pyrophosphatase (209 aa).

Residues lysine 38, arginine 52, and tyrosine 64 each contribute to the substrate site. Mg(2+) is bound by residues aspartate 92, aspartate 97, and aspartate 130. Tyrosine 167 lines the substrate pocket.

It belongs to the PPase family. In terms of assembly, homohexamer. The cofactor is Mg(2+).

The protein resides in the cytoplasm. It carries out the reaction diphosphate + H2O = 2 phosphate + H(+). In terms of biological role, catalyzes the hydrolysis of inorganic pyrophosphate (PPi) forming two phosphate ions. The sequence is that of Inorganic pyrophosphatase from Chlamydia trachomatis serovar L2 (strain ATCC VR-902B / DSM 19102 / 434/Bu).